The primary structure comprises 540 residues: Early growth response protein 1 (540 aa).

2 disordered regions span residues 1-105 and 162-240; these read MAAA…AESF and VSMT…PAYP. A compositionally biased stretch (gly residues) spans 64–75; that stretch reads SSGGGGGGGGGS. A compositionally biased stretch (low complexity) spans 167-190; it reads PPATSSSASSPAASSSASQSPPLS. Residues 192-201 are compositionally biased toward polar residues; it reads AVQSNDSSPI. Residue Lys-304 forms a Glycyl lysine isopeptide (Lys-Gly) (interchain with G-Cter in SUMO2) linkage. The disordered stretch occupies residues 317 to 337; the sequence is PSRMRKYPNRPSKTPPHERPY. The C2H2-type 1 zinc finger occupies 337-361; that stretch reads YACPVESCDRRFSRSDELTRHIRIH. The C2H2-type 2; degenerate zinc finger occupies 366 to 388; sequence PQCRISMRNFSRSDHLTTHIRTH. The segment at 394-416 adopts a C2H2-type 3 zinc-finger fold; that stretch reads FACDICGRKFARSDERKRHTKIH. The interval 407-482 is disordered; the sequence is DERKRHTKIH…SPGSSTYPSP (76 aa). Over residues 411–421 the composition is skewed to basic residues; that stretch reads RHTKIHLRQKD. A compositionally biased stretch (low complexity) spans 427-482; sequence SAASAATSSLPSYPSPVATSYPSPATTSYPSPATTSYPSPVPTSYSSPGSSTYPSP.

The protein belongs to the EGR C2H2-type zinc-finger protein family. Interacts with SNAI1 and SP1 upon 12-O-tetradecanoylphorbol-13-acetate (TPA) induction.

It localises to the nucleus. Its subcellular location is the cytoplasm. Transcriptional regulator. Recognizes and binds to the DNA sequence 5'-GCG(T/G)GGGCG-3'(EGR-site) in the promoter region of target genes. Binds double-stranded target DNA, irrespective of the cytosine methylation status. Regulates the transcription of numerous target genes, and thereby plays an important role in regulating the response to growth factors, DNA damage, and ischemia. Plays a role in the regulation of cell survival, proliferation and cell death. Activates expression of p53/TP53 and TGFB1, and thereby helps prevent tumor formation. Required for normal progress through mitosis and normal proliferation of hepatocytes after partial hepatectomy. Mediates responses to ischemia and hypoxia; regulates the expression of proteins such as IL1B and CXCL2 that are involved in inflammatory processes and development of tissue damage after ischemia. Regulates biosynthesis of luteinizing hormone (LHB) in the pituitary. Regulates the amplitude of the expression rhythms of clock genes: BMAL1, PER2 and NR1D1 in the liver via the activation of PER1 (clock repressor) transcription. Regulates the rhythmic expression of core-clock gene BMAL1 in the suprachiasmatic nucleus (SCN). The sequence is that of Early growth response protein 1 (EGR1) from Bos taurus (Bovine).